The primary structure comprises 670 residues: Small ribosomal subunit protein mS39 (670 aa).

The transit peptide at 1–13 (MAAPCVRLGSVRC) directs the protein to the mitochondrion. PPR repeat units lie at residues 129–163 (VEGV…GTAP), 164–199 (SLET…EVQD), 209–239 (RPRQ…MPER), 240–274 (NAHS…RLTA), 275–314 (DVQT…NVRP), 315–351 (NLLT…NIEP), 352–392 (SLAT…FTLR), 396–430 (DVYF…DNRG), 438–472 (QSTY…LYYP), 473–507 (NSRG…GHSN), and 556–590 (SAGS…HRVP). Positions 187–213 (IQTSEQEQQEVQDQQETEDPKKRPRQY) are disordered. Residues 193 to 203 (EQQEVQDQQET) show a composition bias toward acidic residues. Residues 648–670 (EDLQKSHSSSSSSSSSSSDSDRE) form a disordered region. Low complexity predominate over residues 653–670 (SHSSSSSSSSSSSDSDRE).

Belongs to the mitochondrion-specific ribosomal protein mS39 family.

It localises to the mitochondrion. Mitochondrial protein that may have a role in mitochondrial translation. This chain is Small ribosomal subunit protein mS39 (ptcd3), found in Xenopus tropicalis (Western clawed frog).